The sequence spans 542 residues: Endonuclease 4 homolog (542 aa).

Disordered regions lie at residues 89-123 and 141-234; these read NEEI…QTSI and PFFS…ENKF. Composition is skewed to low complexity over residues 99 to 115 and 147 to 170; these read SKKL…QQSK and NNAS…TTTT. Residues 171–206 adopt a coiled-coil conformation; that stretch reads TKKRNNKDEENEDDNEEEEEEEEEEEDKKSKKKTTT. The span at 179 to 196 shows a compositional bias: acidic residues; sequence EENEDDNEEEEEEEEEEE. Residues 205–215 show a composition bias toward low complexity; it reads TTTTTTTTTTA. Residues 216–227 show a composition bias toward basic residues; the sequence is YKKKSSPKKKKV. Positions 222–227 match the Nuclear localization signal motif; the sequence is PKKKKV. H328, H368, E404, D438, H441, H475, D488, H490, and E520 together coordinate Zn(2+).

It belongs to the AP endonuclease 2 family. Requires Zn(2+) as cofactor.

It localises to the nucleus. It catalyses the reaction Endonucleolytic cleavage to 5'-phosphooligonucleotide end-products.. Functionally, plays a role in DNA repair. It cleaves phosphodiester bonds at apurinic or apyrimidinic sites (AP sites) to produce new 5'-ends that are base-free deoxyribose 5-phosphate residues. In Dictyostelium discoideum (Social amoeba), this protein is Endonuclease 4 homolog (apnA).